The primary structure comprises 234 residues: Sugar fermentation stimulation protein homolog (234 aa).

This sequence belongs to the SfsA family.

This is Sugar fermentation stimulation protein homolog from Shewanella sp. (strain MR-7).